The following is a 122-amino-acid chain: Large ribosomal subunit protein uL14 (122 aa).

It belongs to the universal ribosomal protein uL14 family. In terms of assembly, part of the 50S ribosomal subunit. Forms a cluster with proteins L3 and L19. In the 70S ribosome, L14 and L19 interact and together make contacts with the 16S rRNA in bridges B5 and B8.

Binds to 23S rRNA. Forms part of two intersubunit bridges in the 70S ribosome. The polypeptide is Large ribosomal subunit protein uL14 (Bdellovibrio bacteriovorus (strain ATCC 15356 / DSM 50701 / NCIMB 9529 / HD100)).